A 494-amino-acid polypeptide reads, in one-letter code: Integrin beta-like protein 1 (494 aa).

An N-terminal signal peptide occupies residues 1–23 (MRPPGFRNFLLLASSLLFAGLSA). 40 disulfide bridges follow: cysteine 40/cysteine 71, cysteine 51/cysteine 69, cysteine 63/cysteine 74, cysteine 76/cysteine 89, cysteine 91/cysteine 112, cysteine 96/cysteine 110, cysteine 104/cysteine 115, cysteine 117/cysteine 126, cysteine 132/cysteine 159, cysteine 143/cysteine 157, cysteine 151/cysteine 162, cysteine 164/cysteine 178, cysteine 180/cysteine 202, cysteine 185/cysteine 200, cysteine 194/cysteine 205, cysteine 207/cysteine 216, cysteine 220/cysteine 247, cysteine 231/cysteine 245, cysteine 239/cysteine 250, cysteine 252/cysteine 269, cysteine 271/cysteine 296, cysteine 276/cysteine 294, cysteine 288/cysteine 299, cysteine 301/cysteine 310, cysteine 316/cysteine 343, cysteine 327/cysteine 341, cysteine 335/cysteine 346, cysteine 348/cysteine 361, cysteine 363/cysteine 384, cysteine 368/cysteine 382, cysteine 376/cysteine 387, cysteine 389/cysteine 398, cysteine 404/cysteine 431, cysteine 415/cysteine 429, cysteine 423/cysteine 434, cysteine 436/cysteine 448, cysteine 450/cysteine 471, cysteine 455/cysteine 469, cysteine 463/cysteine 474, and cysteine 476/cysteine 485. I-EGF domains follow at residues 40–90 (CRLS…PLCE), 91–127 (CHEW…DACQ), 132–179 (CDLT…KFCE), 180–217 (CDDR…DKCE), 220–270 (CDIT…DTCE), 271–311 (CDER…KKCE), 316–362 (CTLS…KTCE), 363–399 (CDDR…KLCQ), 404–449 (CNMT…EFCD), and 450–486 (CDDR…NACE). The I repeat unit spans residues 51–95 (CRAPGQPPGAALCHGRGRCDCGVCICHVTEPGMFFGPLCECHEWV). The tract at residues 51-494 (CRAPGQPPGA…CEIWLGSEYP (444 aa)) is cysteine-rich tandem repeats. Residues 96–142 (CETYDGSTCAGHGKCDCGKCKCDQGWYGDACQYPTNCDLTKKKSNQM) form an II repeat. One copy of the III repeat lies at 143–184 (CKNSQDIICSNAGTCHCGRCKCDNSDGSGLVYGKFCECDDRE). Residues 185-230 (CIDDETEEICGGHGKCYCGNCYCKAGWHGDKCEFQCDITPWESKRR) form an IV repeat. The stretch at 231–275 (CTSPDGKICSNRGTCVCGECTCHDVDPTGDWGDIHGDTCECDERD) is one V repeat. Residues 276 to 326 (CRAVYDRYSDDFCSGHGQCNCGRCDCKAGWYGKKCEHPQSCTLSAEESIRK) form a VI repeat. The VII repeat unit spans residues 327-367 (CQGSSDLPCSGRGKCECGKCTCYPPGDRRVYGKTCECDDRR). A VIII repeat occupies 368–414 (CEDLDGVVCGGHGTCSCGRCVCERGWFGKLCQHPRKCNMTEEQSKNL). An N-linked (GlcNAc...) asparagine glycan is attached at asparagine 405. An IX repeat occupies 415 to 454 (CESADGILCSGKGSCHCGKCICSAEEWYISGEFCDCDDRD). The X repeat unit spans residues 455 to 494 (CDKHDGLICTGNGICSCGNCECWDGWNGNACEIWLGSEYP).

Widely expressed in many tissues, but readily detectable only in aorta.

The protein localises to the secreted. The polypeptide is Integrin beta-like protein 1 (ITGBL1) (Homo sapiens (Human)).